Reading from the N-terminus, the 93-residue chain is Small ribosomal subunit protein uS19 (93 aa).

The protein belongs to the universal ribosomal protein uS19 family.

Functionally, protein S19 forms a complex with S13 that binds strongly to the 16S ribosomal RNA. The sequence is that of Small ribosomal subunit protein uS19 from Geobacter sulfurreducens (strain ATCC 51573 / DSM 12127 / PCA).